Here is a 303-residue protein sequence, read N- to C-terminus: NAC domain-containing protein 48 (303 aa).

The NAC domain maps to 9 to 159 (LPPGFRFHPT…DWVLCRIYNK (151 aa)).

As to quaternary structure, interacts with NAC071. In terms of tissue distribution, widely expressed.

It localises to the nucleus. Transcription activator that binds to the promoter of the stress response gene LEA19. Involved in tolerance to abiotic stresses. Transcription activator involved in response to abiotic and biotic stresses. Involved in drought and salt stress responses, and defense response to the rice blast fungus. Transcription activator involved tolerance to cold and salt stresses. Transcription activator involved in tolerance to drought stress. Targets directly and activates genes involved in membrane modification, nicotianamine (NA) biosynthesis, glutathione relocation, accumulation of phosphoadenosine phosphosulfate and glycosylation in roots. Controls root growth at early vegetative stage through chromatin modification and histone lysine deacytaltion by HDAC1. The sequence is that of NAC domain-containing protein 48 from Oryza sativa subsp. japonica (Rice).